Here is a 1212-residue protein sequence, read N- to C-terminus: Histone demethylase UTY (1212 aa).

8 TPR repeats span residues 88 to 121, 125 to 158, 165 to 193, 200 to 233, 245 to 278, 279 to 312, 313 to 346, and 347 to 380; these read SDFF…QTDY, AAFL…DPNF, HLRL…IDCN, VEIQ…ESLP, GWMH…DPNS, GQSW…SEAS, ADTW…DHGH, and AAAW…KSCN. The segment covering 530-539 has biased composition (basic and acidic residues); that stretch reads FTKESKDSRS. The tract at residues 530–555 is disordered; it reads FTKESKDSRSKSLTSKTSRKDRDTSN. At threonine 752 the chain carries Phosphothreonine. Positions 865–886 are disordered; sequence RRTQVKDYSDNESTCSDNSGRR. The JmjC domain occupies 907 to 1070; sequence KWKLQLHELT…YKLAVERYEW (164 aa). Fe cation contacts are provided by histidine 958, glutamate 960, and histidine 1038. Zn(2+)-binding residues include cysteine 1143, cysteine 1146, cysteine 1170, and cysteine 1173.

This sequence belongs to the UTX family. Binds TLE1 and TLE2. Requires L-ascorbate as cofactor. Fe(2+) is required as a cofactor.

The protein localises to the nucleus. The catalysed reaction is N(6),N(6),N(6)-trimethyl-L-lysyl(27)-[histone H3] + 2 2-oxoglutarate + 2 O2 = N(6)-methyl-L-lysyl(27)-[histone H3] + 2 formaldehyde + 2 succinate + 2 CO2. Male-specific histone demethylase that catalyzes trimethylated 'Lys-27' (H3K27me3) demethylation in histone H3. Has relatively low KDM activity. In Mus musculus (Mouse), this protein is Histone demethylase UTY (Uty).